Reading from the N-terminus, the 302-residue chain is Succinate--CoA ligase [ADP-forming] subunit alpha (302 aa).

Residues Thr17–Thr20, Lys43, and Ile96–Glu98 each bind CoA. Tyr159 lines the substrate pocket. His247 acts as the Tele-phosphohistidine intermediate in catalysis.

The protein belongs to the succinate/malate CoA ligase alpha subunit family. Heterotetramer of two alpha and two beta subunits.

The enzyme catalyses succinate + ATP + CoA = succinyl-CoA + ADP + phosphate. The catalysed reaction is GTP + succinate + CoA = succinyl-CoA + GDP + phosphate. It functions in the pathway carbohydrate metabolism; tricarboxylic acid cycle; succinate from succinyl-CoA (ligase route): step 1/1. Functionally, succinyl-CoA synthetase functions in the citric acid cycle (TCA), coupling the hydrolysis of succinyl-CoA to the synthesis of either ATP or GTP and thus represents the only step of substrate-level phosphorylation in the TCA. The alpha subunit of the enzyme binds the substrates coenzyme A and phosphate, while succinate binding and nucleotide specificity is provided by the beta subunit. This Staphylococcus aureus (strain COL) protein is Succinate--CoA ligase [ADP-forming] subunit alpha.